A 342-amino-acid chain; its full sequence is N-acetyl-gamma-glutamyl-phosphate reductase (342 aa).

Residue C149 is part of the active site.

It belongs to the NAGSA dehydrogenase family. Type 1 subfamily.

The protein resides in the cytoplasm. It catalyses the reaction N-acetyl-L-glutamate 5-semialdehyde + phosphate + NADP(+) = N-acetyl-L-glutamyl 5-phosphate + NADPH + H(+). Its pathway is amino-acid biosynthesis; L-arginine biosynthesis; N(2)-acetyl-L-ornithine from L-glutamate: step 3/4. Functionally, catalyzes the NADPH-dependent reduction of N-acetyl-5-glutamyl phosphate to yield N-acetyl-L-glutamate 5-semialdehyde. This Ruegeria pomeroyi (strain ATCC 700808 / DSM 15171 / DSS-3) (Silicibacter pomeroyi) protein is N-acetyl-gamma-glutamyl-phosphate reductase.